Reading from the N-terminus, the 227-residue chain is Ribose-5-phosphate isomerase A (227 aa).

Substrate is bound by residues 26–29, 82–85, and 95–98; these read TGST, DGAD, and KGGG. The active-site Proton acceptor is the Glu-104. Lys-122 contributes to the substrate binding site.

The protein belongs to the ribose 5-phosphate isomerase family. In terms of assembly, homodimer.

It catalyses the reaction aldehydo-D-ribose 5-phosphate = D-ribulose 5-phosphate. The protein operates within carbohydrate degradation; pentose phosphate pathway; D-ribose 5-phosphate from D-ribulose 5-phosphate (non-oxidative stage): step 1/1. In terms of biological role, catalyzes the reversible conversion of ribose-5-phosphate to ribulose 5-phosphate. This Streptococcus equi subsp. zooepidemicus (strain H70) protein is Ribose-5-phosphate isomerase A.